Reading from the N-terminus, the 204-residue chain is uncharacterized protein (204 aa).

A run of 4 helical transmembrane segments spans residues 21 to 50 (AWIV…LLFF), 92 to 114 (FFTA…WWWF), 150 to 172 (LGLR…VLSI), and 176 to 198 (LLAS…ETIL).

It is found in the cell membrane. This is an uncharacterized protein from Aquifex aeolicus (strain VF5).